Reading from the N-terminus, the 299-residue chain is MKTLLEVSNLTSDDIESIFNLTIQYFNNTNLNHNILTGKVIVNLFFESSTRTLSSFEIAEKSLGAHSITLNINTSSINKGESIIDTISNIDAMNPDLIIIRSQYSQFIKKISEYLPSCSIINAGDGHHEHPTQALTDYCTIRYIKKDINNLNISICGDILHSRVARSNIRLLSRYGANISLVAPPTLSCNLTGISHIYHNLIEGIRNADVIMLLRLQKERIINCVIPSEQEYSHLYMLNHEKLLHAKKDVIVMHPGPTNKGIEISNNVAEKNSVILLQVKMGVAARKAILHYLLYNKSI.

Carbamoyl phosphate contacts are provided by Arg-51 and Thr-52. Residue Lys-79 coordinates L-aspartate. Positions 101, 130, and 133 each coordinate carbamoyl phosphate. L-aspartate is bound by residues Arg-163 and Arg-215. Carbamoyl phosphate contacts are provided by Gly-256 and Pro-257.

The protein belongs to the aspartate/ornithine carbamoyltransferase superfamily. ATCase family. As to quaternary structure, heterododecamer (2C3:3R2) of six catalytic PyrB chains organized as two trimers (C3), and six regulatory PyrI chains organized as three dimers (R2).

The enzyme catalyses carbamoyl phosphate + L-aspartate = N-carbamoyl-L-aspartate + phosphate + H(+). The protein operates within pyrimidine metabolism; UMP biosynthesis via de novo pathway; (S)-dihydroorotate from bicarbonate: step 2/3. Catalyzes the condensation of carbamoyl phosphate and aspartate to form carbamoyl aspartate and inorganic phosphate, the committed step in the de novo pyrimidine nucleotide biosynthesis pathway. This is Aspartate carbamoyltransferase catalytic subunit from Ehrlichia chaffeensis (strain ATCC CRL-10679 / Arkansas).